A 289-amino-acid polypeptide reads, in one-letter code: Serine/threonine-protein phosphatase Pgam5, mitochondrial (289 aa).

The protein belongs to the phosphoglycerate mutase family. BPG-dependent PGAM subfamily. As to quaternary structure, interacts with Pk92B/ASK1.

It is found in the mitochondrion outer membrane. The enzyme catalyses O-phospho-L-seryl-[protein] + H2O = L-seryl-[protein] + phosphate. The catalysed reaction is O-phospho-L-threonyl-[protein] + H2O = L-threonyl-[protein] + phosphate. Displays phosphatase activity for serine/threonine residues, and dephosphorylates and activates Pk92B kinase. Has apparently no phosphoglycerate mutase activity. The polypeptide is Serine/threonine-protein phosphatase Pgam5, mitochondrial (Drosophila mojavensis (Fruit fly)).